The sequence spans 827 residues: Periplasmic nitrate reductase (827 aa).

A signal peptide (tat-type signal) is located at residues 1-33; that stretch reads MNLSRRDFMKANAAMAAATAAGLTIPVKNVVAA. A 4Fe-4S Mo/W bis-MGD-type domain is found at 37–93; it reads IKWDKGVCRFCGTGCAVLVGTKDGRVVASQGDPDAEVNRGLNCIKGYFLPKIMYGKD. [4Fe-4S] cluster-binding residues include Cys44, Cys47, Cys51, and Cys79. Mo-bis(molybdopterin guanine dinucleotide)-binding positions include Lys81, Gln148, Asn173, Cys177, 210–217, 241–245, 260–262, Met370, Gln374, Asn480, 506–507, Lys529, Asp556, and 716–725; these read WGSNMAEM, STYEH, QTD, SD, and TGRVLEHWHT. Phe792 is a substrate binding site. 2 residues coordinate Mo-bis(molybdopterin guanine dinucleotide): Asn800 and Lys817.

It belongs to the prokaryotic molybdopterin-containing oxidoreductase family. NasA/NapA/NarB subfamily. As to quaternary structure, component of the periplasmic nitrate reductase NapAB complex composed of NapA and NapB. [4Fe-4S] cluster serves as cofactor. It depends on Mo-bis(molybdopterin guanine dinucleotide) as a cofactor. In terms of processing, predicted to be exported by the Tat system. The position of the signal peptide cleavage has not been experimentally proven.

The protein resides in the periplasm. It carries out the reaction 2 Fe(II)-[cytochrome] + nitrate + 2 H(+) = 2 Fe(III)-[cytochrome] + nitrite + H2O. In terms of biological role, catalytic subunit of the periplasmic nitrate reductase complex NapAB. Receives electrons from NapB and catalyzes the reduction of nitrate to nitrite. The chain is Periplasmic nitrate reductase from Haemophilus influenzae (strain PittEE).